The following is a 293-amino-acid chain: Protein PET54 (293 aa).

The protein localises to the mitochondrion inner membrane. Functionally, activator of specific mitochondrial mRNAs. PET54 is involved in the excision of intron aI5-beta from pre-mRNA for cytochrome c oxidase I (COX1) and plays a role in promoting the translation of COX3. In Saccharomyces cerevisiae (strain ATCC 204508 / S288c) (Baker's yeast), this protein is Protein PET54 (PET54).